The sequence spans 705 residues: DNA polymerase alpha subunit B (705 aa).

Residues 115-199 are disordered; sequence KKRKLHGPFS…TPTTSRQNVP (85 aa). Residues 125–134 are compositionally biased toward polar residues; the sequence is LSDSKQTYNV. The residue at position 126 (Ser126) is a Phosphoserine. A compositionally biased stretch (low complexity) spans 181–197; it reads STFQTPTTNTPTTSRQN.

This sequence belongs to the DNA polymerase alpha subunit B family. As to quaternary structure, DNA polymerase alpha:primase is a four subunit enzyme complex, which is assembled throughout the cell cycle, and consists of the two DNA polymerase subunits A POL1 and B POL12, and the DNA primase large PRI2 and small PRI1 subunits. Subunit B POL12 binds to subunit A POL1. Post-translationally, phosphorylated in a cell cycle-dependent manner.

It localises to the nucleus. Its function is as follows. Non-catalytic component of DNA polymerase alpha, which in a complex with DNA primase (DNA polymerase alpha:primase) constitutes a replicative polymerase. POL12 may play an essential role at the early stage of chromosomal DNA replication by coupling DNA polymerase alpha to the cellular replication machinery. Interacts with MCM10. The chain is DNA polymerase alpha subunit B (POL12) from Saccharomyces cerevisiae (strain ATCC 204508 / S288c) (Baker's yeast).